The primary structure comprises 264 residues: Phosphonates import ATP-binding protein PhnC (264 aa).

The 248-residue stretch at 8-255 (LQAENLRMTF…KLIEIYGPEF (248 aa)) folds into the ABC transporter domain. 40–47 (GPSGSGKS) is a binding site for ATP.

Belongs to the ABC transporter superfamily. Phosphonates importer (TC 3.A.1.9.1) family. The complex is composed of two ATP-binding proteins (PhnC), two transmembrane proteins (PhnE) and a solute-binding protein (PhnD).

The protein resides in the cell inner membrane. It carries out the reaction phosphonate(out) + ATP + H2O = phosphonate(in) + ADP + phosphate + H(+). Its function is as follows. Part of the ABC transporter complex PhnCDE involved in phosphonates import. Responsible for energy coupling to the transport system. The sequence is that of Phosphonates import ATP-binding protein PhnC from Maricaulis maris (strain MCS10) (Caulobacter maris).